Here is a 506-residue protein sequence, read N- to C-terminus: Cytochrome P450 monooxygenase atr2 (506 aa).

Residues 18 to 38 (VFAGLVLASLLTTTYCIWNIF) traverse the membrane as a helical segment. C451 serves as a coordination point for heme.

It belongs to the cytochrome P450 family. It depends on heme as a cofactor.

Its subcellular location is the membrane. The catalysed reaction is 4-O-demethylbarbatate + reduced [NADPH--hemoprotein reductase] + O2 = proatranorin II + oxidized [NADPH--hemoprotein reductase] + H2O + H(+). It catalyses the reaction proatranorin II + reduced [NADPH--hemoprotein reductase] + O2 = proatranorin III + oxidized [NADPH--hemoprotein reductase] + 2 H2O + H(+). It carries out the reaction proatranorin I + reduced [NADPH--hemoprotein reductase] + O2 = proatranorin IV + oxidized [NADPH--hemoprotein reductase] + H2O + H(+). The enzyme catalyses proatranorin IV + reduced [NADPH--hemoprotein reductase] + O2 = atranorin + oxidized [NADPH--hemoprotein reductase] + 2 H2O + H(+). The protein operates within secondary metabolite biosynthesis; terpenoid biosynthesis. Cytochrome P450 monooxygenase; part of the gene cluster that mediates the biosynthesis of atranorin, a depside of polyketide origin that accumulates in the cortical or medullary layers of lichen thalli. Atr2 performs the oxidation at the C-9 position of 4-O-demethylbarbatic acid to yield proatranorin III via proatranorin II. Atr2 is also able to oxidize the atr3 product proatranorin I to produce the final compound atranorin. The first step in the pathway is performed by the non-reducing polyketide synthase atr1 that produces 4-O-demethylbarbatic acid composed of two 3-methylorsellinic acid (3MOA) moieties. The pathway continues with the actions of the cytochrome P450 monooygenase atr2 that catalizes the oxidation of c-9 and the O-methyltransferase atr3 that performs the methylation of the carboxyl group to yield atranorin, via the proatranorin II and III intermediates if atr2 acts first, or the proatranorin I intermediate if atr3 acts first. This is Cytochrome P450 monooxygenase atr2 from Stereocaulon alpinum (Alpine snow lichen).